The following is a 224-amino-acid chain: MDGGQQGSFFGLLVIVIPIILLIVFFSKKKGAQKNDFSGEGGNRSSRKDEVWKTIKQFLQEKNERGKEIIKTFVAKKPNPLHSKKDRKLFNQEIQAYITSNNLGKSEAKRYKNEQTRLMQRELYCIYFVTKDAKSTEVDDARIIEAEVYQKPTKTKSTPERLIRILGLKNFETEMQWIQPLMVREEKRKEKEEQKKLKLAARELKKKKKKKIKKPKEIRNQKNV.

The segment at 203-224 is disordered; the sequence is ELKKKKKKKIKKPKEIRNQKNV. Residues 204–214 show a composition bias toward basic residues; sequence LKKKKKKKIKK. The span at 215 to 224 shows a compositional bias: basic and acidic residues; the sequence is PKEIRNQKNV.

This is an uncharacterized protein from Mycoplasma genitalium (strain ATCC 33530 / DSM 19775 / NCTC 10195 / G37) (Mycoplasmoides genitalium).